The sequence spans 191 residues: Pyridoxal 5'-phosphate synthase subunit PdxT (191 aa).

48–50 (GES) contacts L-glutamine. C79 (nucleophile) is an active-site residue. Residues R106 and 134–135 (IR) contribute to the L-glutamine site. Residues H170 and E172 each act as charge relay system in the active site.

The protein belongs to the glutaminase PdxT/SNO family. In terms of assembly, in the presence of PdxS, forms a dodecamer of heterodimers. Only shows activity in the heterodimer.

The enzyme catalyses aldehydo-D-ribose 5-phosphate + D-glyceraldehyde 3-phosphate + L-glutamine = pyridoxal 5'-phosphate + L-glutamate + phosphate + 3 H2O + H(+). It catalyses the reaction L-glutamine + H2O = L-glutamate + NH4(+). It functions in the pathway cofactor biosynthesis; pyridoxal 5'-phosphate biosynthesis. Catalyzes the hydrolysis of glutamine to glutamate and ammonia as part of the biosynthesis of pyridoxal 5'-phosphate. The resulting ammonia molecule is channeled to the active site of PdxS. This chain is Pyridoxal 5'-phosphate synthase subunit PdxT, found in Oenococcus oeni (strain ATCC BAA-331 / PSU-1).